Consider the following 122-residue polypeptide: Large ribosomal subunit protein uL14 (122 aa).

It belongs to the universal ribosomal protein uL14 family. As to quaternary structure, part of the 50S ribosomal subunit. Forms a cluster with proteins L3 and L19. In the 70S ribosome, L14 and L19 interact and together make contacts with the 16S rRNA in bridges B5 and B8.

Binds to 23S rRNA. Forms part of two intersubunit bridges in the 70S ribosome. The sequence is that of Large ribosomal subunit protein uL14 from Chlamydia muridarum (strain MoPn / Nigg).